A 379-amino-acid chain; its full sequence is uncharacterized protein (379 aa).

3 disordered regions span residues 1–37, 130–150, and 332–379; these read MSSI…SGQT, VRYS…LSPE, and NPPI…RGSR.

This sequence belongs to the chlamydial CPn_0499/CT_392/TC_0671 family.

This is an uncharacterized protein from Chlamydia muridarum (strain MoPn / Nigg).